Reading from the N-terminus, the 242-residue chain is Endothelial protein C receptor (242 aa).

A signal peptide spans 1 to 17 (MLTKFLPLLLLLLPGCA). At 18 to 214 (LCNSDGSQSL…GSQTGRSYTS (197 aa)) the chain is on the extracellular side. N-linked (GlcNAc...) asparagine glycans are attached at residues Asn46, Asn63, Asn140, Asn166, and Asn176. 2 disulfides stabilise this stretch: Cys119-Cys190 and Cys223-Cys236. The chain crosses the membrane as a helical span at residues 215–235 (LVLGILMGCFIIAGVAVGIFM). Over 236 to 242 (CTSGRRC) the chain is Cytoplasmic.

In terms of tissue distribution, expressed in endothelial cells.

Its subcellular location is the membrane. Functionally, binds activated protein C. Enhances protein C activation by the thrombin-thrombomodulin complex; plays a role in the protein C pathway controlling blood coagulation. The protein is Endothelial protein C receptor (Procr) of Mus musculus (Mouse).